Reading from the N-terminus, the 1009-residue chain is Anillin-like protein 2 (1009 aa).

Disordered regions lie at residues 1–29 (MYRR…DSNR), 272–295 (FGQE…QTIV), and 539–558 (GTGY…PTLV). Residues 542 to 557 (YSASSSGPQFTRSPTL) show a composition bias toward polar residues. Residues 626–657 (SAADKINDSKRQISKLIETIEKTRKHIQLAEI) are a coiled coil. The PH domain occupies 892–1005 (DVEYRGFLYL…WLNAINDTLF (114 aa)).

In terms of tissue distribution, localizes to the surface of the rachis.

Required to maintain the structure of the rachis, the central cytoplasmic core of the syncytial adult gonad. Failure to maintain the rachis leads to premature dissociation of oocytes and thereby impedes oogenesis. The protein is Anillin-like protein 2 (ani-2) of Caenorhabditis elegans.